We begin with the raw amino-acid sequence, 333 residues long: BRISC and BRCA1-A complex member 1 (333 aa).

Methionine 1 carries the post-translational modification N-acetylmethionine. Positions 1 to 85 are disordered; the sequence is MEVAEANSPT…PWQVPASASE (85 aa). Serine 8 is subject to Phosphoserine. Acidic residues predominate over residues 10-24; that stretch reads TEEEEEEEEEGEETI. Phosphoserine occurs at positions 33 and 53. The segment covering 58–67 has biased composition (low complexity); the sequence is EAATADGGAA. The VWFA-like stretch occupies residues 99–302; it reads VIICLDLSEE…LELHNCMAKL (204 aa).

This sequence belongs to the BABAM1 family. In terms of assembly, component of the ARISC complex, at least composed of UIMC1/RAP80, ABRAXAS1, BRCC3/BRCC36, BABAM2 and BABAM1/NBA1. Component of the BRCA1-A complex, at least composed of BRCA1, BARD1, UIMC1/RAP80, ABRAXAS1, BRCC3/BRCC36, BABAM2 and BABAM1/NBA1. In the BRCA1-A complex, interacts directly with ABRAXAS1 and BABAM2. Component of the BRISC complex, at least composed of ABRAXAS2, BRCC3/BRCC36, BABAM2 and BABAM1/NBA1. Identified in a complex with SHMT2 and the other subunits of the BRISC complex.

The protein resides in the cytoplasm. It localises to the nucleus. Component of the BRCA1-A complex, a complex that specifically recognizes 'Lys-63'-linked ubiquitinated histones H2A and H2AX at DNA lesions sites, leading to target the BRCA1-BARD1 heterodimer to sites of DNA damage at double-strand breaks (DSBs). The BRCA1-A complex also possesses deubiquitinase activity that specifically removes 'Lys-63'-linked ubiquitin on histones H2A and H2AX. In the BRCA1-A complex, it is required for the complex integrity and its localization at DSBs. Component of the BRISC complex, a multiprotein complex that specifically cleaves 'Lys-63'-linked ubiquitin in various substrates. In these 2 complexes, it is probably required to maintain the stability of BABAM2 and help the 'Lys-63'-linked deubiquitinase activity mediated by BRCC3/BRCC36 component. The BRISC complex is required for normal mitotic spindle assembly and microtubule attachment to kinetochores via its role in deubiquitinating NUMA1. Plays a role in interferon signaling via its role in the deubiquitination of the interferon receptor IFNAR1; deubiquitination increases IFNAR1 activity by enhancing its stability and cell surface expression. Down-regulates the response to bacterial lipopolysaccharide (LPS) via its role in IFNAR1 deubiquitination. This is BRISC and BRCA1-A complex member 1 (Babam1) from Mus musculus (Mouse).